Consider the following 78-residue polypeptide: Omega-conotoxin-like 2 (78 aa).

A signal peptide spans Met-1–Ala-22. Positions Asp-23–Lys-42 are excised as a propeptide. 3 disulfide bridges follow: Cys-46–Cys-62, Cys-53–Cys-65, and Cys-61–Cys-72.

Belongs to the conotoxin O1 superfamily. As to expression, expressed by the venom duct.

It is found in the secreted. In terms of biological role, omega-conotoxins act at presynaptic membranes, they bind and block voltage-gated calcium channels (Cav). This is Omega-conotoxin-like 2 from Conus striatus (Striated cone).